Consider the following 335-residue polypeptide: Lipoyl synthase (335 aa).

Residues 1–13 (MTIDTNPESSTPS) show a composition bias toward polar residues. Residues 1-29 (MTIDTNPESSTPSAPAYNPSEKQKGSAKT) are disordered. The [4Fe-4S] cluster site is built by Cys-75, Cys-80, Cys-86, Cys-101, Cys-105, Cys-108, and Ser-315. Residues 86-304 (CFGKGTATFM…EEEAYKMGFA (219 aa)) form the Radical SAM core domain.

The protein belongs to the radical SAM superfamily. Lipoyl synthase family. [4Fe-4S] cluster serves as cofactor.

It localises to the cytoplasm. It carries out the reaction [[Fe-S] cluster scaffold protein carrying a second [4Fe-4S](2+) cluster] + N(6)-octanoyl-L-lysyl-[protein] + 2 oxidized [2Fe-2S]-[ferredoxin] + 2 S-adenosyl-L-methionine + 4 H(+) = [[Fe-S] cluster scaffold protein] + N(6)-[(R)-dihydrolipoyl]-L-lysyl-[protein] + 4 Fe(3+) + 2 hydrogen sulfide + 2 5'-deoxyadenosine + 2 L-methionine + 2 reduced [2Fe-2S]-[ferredoxin]. The protein operates within protein modification; protein lipoylation via endogenous pathway; protein N(6)-(lipoyl)lysine from octanoyl-[acyl-carrier-protein]: step 2/2. In terms of biological role, catalyzes the radical-mediated insertion of two sulfur atoms into the C-6 and C-8 positions of the octanoyl moiety bound to the lipoyl domains of lipoate-dependent enzymes, thereby converting the octanoylated domains into lipoylated derivatives. This is Lipoyl synthase from Herminiimonas arsenicoxydans.